We begin with the raw amino-acid sequence, 399 residues long: F-box protein At1g30790 (399 aa).

Positions 3 to 49 (RQEIDHIPFDLTVEILTRLPAKSLMKFKCVSKLWSSIIHNQSFIDSF) constitute an F-box domain.

The polypeptide is F-box protein At1g30790 (Arabidopsis thaliana (Mouse-ear cress)).